Here is an 809-residue protein sequence, read N- to C-terminus: Acyl-homoserine lactone acylase QuiP (809 aa).

Positions 1 to 26 (MASPAFSHFLPRFGVAAAVASALSLA) are cleaved as a signal peptide. Catalysis depends on S261, which acts as the Nucleophile.

The protein belongs to the peptidase S45 family. In terms of assembly, heterodimer of an alpha subunit and a beta subunit processed from the same precursor.

The protein resides in the periplasm. It carries out the reaction an N-acyl-L-homoserine lactone + H2O = L-homoserine lactone + a carboxylate. Catalyzes the deacylation of acyl-homoserine lactone (AHL or acyl-HSL), releasing homoserine lactone (HSL) and the corresponding fatty acid. Possesses a specificity for the degradation of long-chain acyl-HSLs (side chains of seven or more carbons in length). This chain is Acyl-homoserine lactone acylase QuiP (quiP), found in Pseudomonas fluorescens (strain ATCC BAA-477 / NRRL B-23932 / Pf-5).